The sequence spans 972 residues: C-1-tetrahydrofolate synthase, mitochondrial (972 aa).

The N-terminal 55 residues, 1-55, are a transit peptide targeting the mitochondrion; that stretch reads MNVMVSFNQLRNYFLESNSLRPSKWLFQSYGTSSSANILNGKLLARKLQRSVAEE. Positions 56–340 are methylenetetrahydrofolate dehydrogenase and cyclohydrolase; the sequence is VQALKAKDRN…DLNPLELKKP (285 aa). Substrate contacts are provided by residues 84–88 and 131–133; these read YVRMK and VQL. Residues 202–204 and serine 227 each bind NADP(+); that span reads GRS. 299 to 303 contacts substrate; sequence PGGVG. Positions 341 to 972 are formyltetrahydrofolate synthetase; sequence VPSDIEIANS…CENGEIVGLS (632 aa). ATP is bound at residue 405–412; the sequence is TPFGEGKS.

The protein in the N-terminal section; belongs to the tetrahydrofolate dehydrogenase/cyclohydrolase family. In the C-terminal section; belongs to the formate--tetrahydrofolate ligase family. In terms of assembly, homodimer.

It is found in the mitochondrion. It catalyses the reaction (6R)-5,10-methylene-5,6,7,8-tetrahydrofolate + NADP(+) = (6R)-5,10-methenyltetrahydrofolate + NADPH. The catalysed reaction is (6R)-5,10-methenyltetrahydrofolate + H2O = (6R)-10-formyltetrahydrofolate + H(+). It carries out the reaction (6S)-5,6,7,8-tetrahydrofolate + formate + ATP = (6R)-10-formyltetrahydrofolate + ADP + phosphate. Its pathway is one-carbon metabolism; tetrahydrofolate interconversion. Its function is as follows. Mitochondrial isozyme of C-1-tetrahydrofolate synthase. The trifunctional enzyme catalyzes the interconversion of the one-carbon derivatives of tetrahydrofolate (THF) between different oxidation states by the enzymatic activities 10-formyltetrahydrofolate synthetase, 5,lO-methenyltetrahydrofolate cyclohydrolase, and 5,lO-methylenetetrahydrofolate dehydrogenase. This Schizosaccharomyces pombe (strain 972 / ATCC 24843) (Fission yeast) protein is C-1-tetrahydrofolate synthase, mitochondrial (ade9).